A 127-amino-acid chain; its full sequence is Putative membrane protein insertion efficiency factor (127 aa).

A disordered region spans residues 71–106; it reads DPPPPPRLHRAAAARMPRQRDADPRDTTRCSSTGAE. The span at 88–98 shows a compositional bias: basic and acidic residues; the sequence is RQRDADPRDTT.

This sequence belongs to the UPF0161 family.

Its subcellular location is the cell inner membrane. Could be involved in insertion of integral membrane proteins into the membrane. The sequence is that of Putative membrane protein insertion efficiency factor from Sorangium cellulosum (strain So ce56) (Polyangium cellulosum (strain So ce56)).